Consider the following 165-residue polypeptide: Fatty acid-binding protein homolog 3 (165 aa).

A signal peptide spans 1–19 (MNLYLTLFSFCFLAIMAEA).

This sequence belongs to the calycin superfamily. Fatty-acid binding protein (FABP) family. As to expression, expressed in presumptive hypodermal cells by the comma stage and in posterior body wall muscle cells by the two-fold stage. From L1 to adult stages, expression continues in body wall muscle cells adjacent to the pseudocoelom, while hypodermal expression is extinguished.

The protein resides in the secreted. Its function is as follows. May play a role in sequestering potentially toxic fatty acids and their peroxidation products, or it may be involved in the maintenance of the impermeable lipid layer of the eggshell. This Caenorhabditis elegans protein is Fatty acid-binding protein homolog 3 (lbp-3).